Here is a 554-residue protein sequence, read N- to C-terminus: Putative F-box/LRR-repeat protein 8 (554 aa).

The F-box domain maps to 71–117 (YDYISNLPDECLSLIFQSLTCADLKRCSLVCRRWLTIEGQCRHRLSL). 12 LRR repeats span residues 119–144 (AQSD…VLRS), 148–173 (SLGI…KLRG), 174–199 (CPEI…SFGS), 205–224 (KGMN…SVKR), 250–275 (KELH…KIFR), 301–325 (RIQM…HLVK), 326–351 (TPDC…HIDG), 354–379 (TNRI…VLIG), 383–404 (TKLS…ALCG), 405–428 (SDTV…KLCI), 430–455 (NCPI…KVKK), and 456–480 (CRGV…NLDA).

The polypeptide is Putative F-box/LRR-repeat protein 8 (FBL8) (Arabidopsis thaliana (Mouse-ear cress)).